We begin with the raw amino-acid sequence, 476 residues long: Proline--tRNA ligase 2 (476 aa).

It belongs to the class-II aminoacyl-tRNA synthetase family. ProS type 3 subfamily. In terms of assembly, homodimer.

It is found in the cytoplasm. It carries out the reaction tRNA(Pro) + L-proline + ATP = L-prolyl-tRNA(Pro) + AMP + diphosphate. Its function is as follows. Catalyzes the attachment of proline to tRNA(Pro) in a two-step reaction: proline is first activated by ATP to form Pro-AMP and then transferred to the acceptor end of tRNA(Pro). The sequence is that of Proline--tRNA ligase 2 from Bacillus thuringiensis (strain Al Hakam).